A 276-amino-acid polypeptide reads, in one-letter code: F420-dependent methylenetetrahydromethanopterin dehydrogenase (276 aa).

The protein belongs to the MTD family.

The enzyme catalyses 5,10-methylenetetrahydromethanopterin + oxidized coenzyme F420-(gamma-L-Glu)(n) + 2 H(+) = 5,10-methenyl-5,6,7,8-tetrahydromethanopterin + reduced coenzyme F420-(gamma-L-Glu)(n). Its pathway is one-carbon metabolism; methanogenesis from CO(2); 5,10-methylene-5,6,7,8-tetrahydromethanopterin from 5,10-methenyl-5,6,7,8-tetrahydromethanopterin (coenzyme F420 route): step 1/1. Its function is as follows. Catalyzes the reversible reduction of methenyl-H(4)MPT(+) to methylene-H(4)MPT. The sequence is that of F420-dependent methylenetetrahydromethanopterin dehydrogenase from Methanococcus vannielii (strain ATCC 35089 / DSM 1224 / JCM 13029 / OCM 148 / SB).